Consider the following 284-residue polypeptide: Tropomyosin (284 aa).

Residues 1–284 (MDAIKKKMVA…DATFAELAGY (284 aa)) are a coiled coil. Over residues 32 to 41 (TEEAKAKIED) the composition is skewed to basic and acidic residues. The disordered stretch occupies residues 32-60 (TEEAKAKIEDDYNSLQKKSIQTENDLDNT). Over residues 44–60 (NSLQKKSIQTENDLDNT) the composition is skewed to polar residues.

Belongs to the tropomyosin family. In terms of assembly, homodimer.

Functionally, tropomyosin, in association with the troponin complex, plays a central role in the calcium dependent regulation of muscle contraction. This chain is Tropomyosin, found in Mytilus edulis (Blue mussel).